The primary structure comprises 402 residues: Phosphoribulokinase, chloroplastic (402 aa).

The transit peptide at 1–51 directs the protein to the chloroplast; it reads MAVCTVYTIPTTTHLGSSFNQNNKQVFFNYKRSSSSNNTLFTTRPSYVITC. An intrachain disulfide couples cysteine 67 to cysteine 106.

It belongs to the phosphoribulokinase family.

It is found in the plastid. Its subcellular location is the chloroplast. The catalysed reaction is D-ribulose 5-phosphate + ATP = D-ribulose 1,5-bisphosphate + ADP + H(+). It participates in carbohydrate biosynthesis; Calvin cycle. Its activity is regulated as follows. Light regulated via thioredoxin by reversible oxidation/reduction of sulfhydryl/disulfide groups. This Spinacia oleracea (Spinach) protein is Phosphoribulokinase, chloroplastic.